The following is a 559-amino-acid chain: Inositol-3-phosphate synthase 1 (559 aa).

Positions 67, 68, 69, 70, 141, 177, 178, 188, 191, 228, 229, 230, 231, 278, 279, 303, 306, 337, 338, 339, and 352 each coordinate NAD(+). Phosphoserine is present on Ser-279. Ser-357 carries the post-translational modification Phosphoserine. Residues Gly-390, Asp-391, Asp-419, and Ser-420 each contribute to the NAD(+) site.

The protein belongs to the myo-inositol 1-phosphate synthase family. The cofactor is NAD(+).

The protein localises to the cytoplasm. It carries out the reaction D-glucose 6-phosphate = 1D-myo-inositol 3-phosphate. Its pathway is polyol metabolism; myo-inositol biosynthesis; myo-inositol from D-glucose 6-phosphate: step 1/2. Its function is as follows. Key enzyme in myo-inositol biosynthesis pathway that catalyzes the conversion of glucose 6-phosphate to 1-myo-inositol 1-phosphate in a NAD-dependent manner. Rate-limiting enzyme in the synthesis of all inositol-containing compounds. The protein is Inositol-3-phosphate synthase 1 (ISYNA1) of Macaca fascicularis (Crab-eating macaque).